The chain runs to 667 residues: Long-chain-fatty-acid--CoA ligase ACSBG2 (667 aa).

Residues 1–14 are compositionally biased toward basic and acidic residues; that stretch reads MTQEKKAEDPDRGM. The disordered stretch occupies residues 1-20; it reads MTQEKKAEDPDRGMDTTSAA. ATP contacts are provided by residues 227–235, 418–423, Asp-496, Arg-511, and Arg-624; these read TSGTTGSPK and EIYGMT.

The protein belongs to the ATP-dependent AMP-binding enzyme family. Bubblegum subfamily.

It localises to the cytoplasm. The protein localises to the membrane. It carries out the reaction a long-chain fatty acid + ATP + CoA = a long-chain fatty acyl-CoA + AMP + diphosphate. It catalyses the reaction (5Z,8Z,11Z,14Z)-eicosatetraenoate + ATP + CoA = (5Z,8Z,11Z,14Z)-eicosatetraenoyl-CoA + AMP + diphosphate. The enzyme catalyses hexadecanoate + ATP + CoA = hexadecanoyl-CoA + AMP + diphosphate. The catalysed reaction is (9Z)-octadecenoate + ATP + CoA = (9Z)-octadecenoyl-CoA + AMP + diphosphate. It carries out the reaction (9Z,12Z)-octadecadienoate + ATP + CoA = (9Z,12Z)-octadecadienoyl-CoA + AMP + diphosphate. It catalyses the reaction tetracosanoate + ATP + CoA = tetracosanoyl-CoA + AMP + diphosphate. Functionally, catalyzes the conversion of fatty acids such as long chain and very long-chain fatty acids to their active form acyl-CoAs for both synthesis of cellular lipids, and degradation via beta-oxidation. Can activate diverse saturated, monosaturated and polyunsaturated fatty acids. Has increased ability to activate oleic and linoleic acid. May play a role in spermatogenesis. The polypeptide is Long-chain-fatty-acid--CoA ligase ACSBG2 (Rattus norvegicus (Rat)).